The sequence spans 485 residues: Sulfated surface glycoprotein 185 (485 aa).

An N-terminal signal peptide occupies residues 1–20; the sequence is MSKLLLVALFGAIAVVATSA. N-linked (GlcNAc...) asparagine glycosylation occurs at Asn193. Positions 212-317 are disordered; it reads LSGPNVNPIG…PPVPPPPSPP (106 aa). Composition is skewed to pro residues over residues 221–234 and 241–317; these read GPAPNNSPLPPSPQ and PPSP…PSPP. N-linked (GlcNAc...) asparagine glycosylation occurs at Asn347.

Polymer. Post-translationally, intersubunit cross-links are formed between saccharide chains rather than between polypeptide chains. Hydroxylated on proline residues in the Pro-rich central domain. In terms of processing, glycosylated; contains sulfate-substituted glycans.

Functionally, the extracellular matrix (ECM) of Volvox contains insoluble fibrous layers that surround individual cells at a distance to form contiguous cellular compartments. SSG 185 is the monomeric precursor of this substructure (C3Z structure). This chain is Sulfated surface glycoprotein 185, found in Volvox carteri (Green alga).